The primary structure comprises 55 residues: Large ribosomal subunit protein bL33B (55 aa).

The protein belongs to the bacterial ribosomal protein bL33 family.

The polypeptide is Large ribosomal subunit protein bL33B (rpmG2) (Mycobacterium tuberculosis (strain CDC 1551 / Oshkosh)).